We begin with the raw amino-acid sequence, 232 residues long: Orotate phosphoribosyltransferase (232 aa).

5-phospho-alpha-D-ribose 1-diphosphate contacts are provided by residues R107, K108, K111, and 133 to 141 (EDLTTDGGS). Residue T137 coordinates orotate.

This sequence belongs to the purine/pyrimidine phosphoribosyltransferase family. PyrE subfamily. In terms of assembly, homodimer. Requires Mg(2+) as cofactor.

It catalyses the reaction orotidine 5'-phosphate + diphosphate = orotate + 5-phospho-alpha-D-ribose 1-diphosphate. It participates in pyrimidine metabolism; UMP biosynthesis via de novo pathway; UMP from orotate: step 1/2. Catalyzes the transfer of a ribosyl phosphate group from 5-phosphoribose 1-diphosphate to orotate, leading to the formation of orotidine monophosphate (OMP). The chain is Orotate phosphoribosyltransferase from Cereibacter sphaeroides (strain KD131 / KCTC 12085) (Rhodobacter sphaeroides).